A 724-amino-acid polypeptide reads, in one-letter code: Catalase-peroxidase (724 aa).

The segment at residues 98-226 (WHSAGTYRIA…LAAVMMGLIY (129 aa)) is a cross-link (tryptophyl-tyrosyl-methioninium (Trp-Tyr) (with M-252)). His-99 (proton acceptor) is an active-site residue. The segment at residues 226–252 (YVNPEGVDGNPDPLKTAQDMRVTFARM) is a cross-link (tryptophyl-tyrosyl-methioninium (Tyr-Met) (with W-98)). His-267 contacts heme b.

It belongs to the peroxidase family. Peroxidase/catalase subfamily. Homodimer or homotetramer. Heme b serves as cofactor. Post-translationally, formation of the three residue Trp-Tyr-Met cross-link is important for the catalase, but not the peroxidase activity of the enzyme.

It carries out the reaction H2O2 + AH2 = A + 2 H2O. The catalysed reaction is 2 H2O2 = O2 + 2 H2O. In terms of biological role, bifunctional enzyme with both catalase and broad-spectrum peroxidase activity. The sequence is that of Catalase-peroxidase from Vibrio cholerae serotype O1 (strain ATCC 39315 / El Tor Inaba N16961).